Consider the following 936-residue polypeptide: Probable outer membrane protein pmp7 (936 aa).

The first 23 residues, 1-23 (MKSSVSWLFFSSIPLFSSLSIVA), serve as a signal peptide directing secretion. The Autotransporter domain maps to 636 to 936 (GEPFERELWL…NTNLGSKFCF (301 aa)).

Belongs to the PMP outer membrane protein family.

Its subcellular location is the secreted. It is found in the cell wall. The protein resides in the cell outer membrane. This chain is Probable outer membrane protein pmp7 (pmp7), found in Chlamydia pneumoniae (Chlamydophila pneumoniae).